The chain runs to 142 residues: Mini-ribonuclease 3 (142 aa).

The active site involves aspartate 33.

The protein belongs to the MrnC RNase family. Homodimer. The cofactor is Mg(2+).

It is found in the cytoplasm. Involved in correct processing of both the 5' and 3' ends of 23S rRNA precursor. Processes 30S rRNA precursor transcript even in absence of ribonuclease 3 (Rnc); Rnc processes 30S rRNA into smaller rRNA precursors. The chain is Mini-ribonuclease 3 from Thermoanaerobacter sp. (strain X514).